The primary structure comprises 76 residues: MTQKRPYEHRKAQKQVKNLESYQCMVCWEVNSKANGHHLIPYSEGGSADIQNMMTLCPSCHTKYHKGELKIDIHRF.

One can recognise an HNH domain in the interval 24–66; that stretch reads CMVCWEVNSKANGHHLIPYSEGGSADIQNMMTLCPSCHTKYHK.

Belongs to the HNH nuclease family.

In terms of biological role, putative P-450 reductase. This Nostoc sp. (strain PCC 7120 / SAG 25.82 / UTEX 2576) protein is Anaredoxin.